A 349-amino-acid chain; its full sequence is Histidinol-phosphate aminotransferase (349 aa).

Lys206 is subject to N6-(pyridoxal phosphate)lysine.

Belongs to the class-II pyridoxal-phosphate-dependent aminotransferase family. Histidinol-phosphate aminotransferase subfamily. As to quaternary structure, homodimer. The cofactor is pyridoxal 5'-phosphate.

The catalysed reaction is L-histidinol phosphate + 2-oxoglutarate = 3-(imidazol-4-yl)-2-oxopropyl phosphate + L-glutamate. Its pathway is amino-acid biosynthesis; L-histidine biosynthesis; L-histidine from 5-phospho-alpha-D-ribose 1-diphosphate: step 7/9. This chain is Histidinol-phosphate aminotransferase, found in Hydrogenobaculum sp. (strain Y04AAS1).